The following is a 47-amino-acid chain: Potamin-1 (47 aa).

3 cysteine pairs are disulfide-bonded: C3–C40, C6–C24, and C7–C36.

Functionally, inhibitor of serine proteases chymotrypsin, papain and trypsin. Has strong antifungal activity against C.albicans and R.solani. Has antibacterial activity against the Gram-positive bacterium C.michiganense, but lacks antibacterial activity against the Gram-positive bacterium S.aureus. Lacks hemolytic activity against human erythrocytes. The protein is Potamin-1 of Solanum tuberosum (Potato).